A 172-amino-acid polypeptide reads, in one-letter code: Ribosome maturation factor RimM (172 aa).

The PRC barrel domain maps to 94 to 167; sequence ENEFYLFQLK…FIKVELLPGM (74 aa).

This sequence belongs to the RimM family. As to quaternary structure, binds ribosomal protein uS19.

It is found in the cytoplasm. In terms of biological role, an accessory protein needed during the final step in the assembly of 30S ribosomal subunit, possibly for assembly of the head region. Essential for efficient processing of 16S rRNA. May be needed both before and after RbfA during the maturation of 16S rRNA. It has affinity for free ribosomal 30S subunits but not for 70S ribosomes. In Carboxydothermus hydrogenoformans (strain ATCC BAA-161 / DSM 6008 / Z-2901), this protein is Ribosome maturation factor RimM.